The chain runs to 287 residues: ATP synthase gamma chain (287 aa).

The protein belongs to the ATPase gamma chain family. As to quaternary structure, F-type ATPases have 2 components, CF(1) - the catalytic core - and CF(0) - the membrane proton channel. CF(1) has five subunits: alpha(3), beta(3), gamma(1), delta(1), epsilon(1). CF(0) has three main subunits: a, b and c.

Its subcellular location is the cell inner membrane. Produces ATP from ADP in the presence of a proton gradient across the membrane. The gamma chain is believed to be important in regulating ATPase activity and the flow of protons through the CF(0) complex. In Colwellia psychrerythraea (strain 34H / ATCC BAA-681) (Vibrio psychroerythus), this protein is ATP synthase gamma chain.